The primary structure comprises 549 residues: 4-hydroxybutyrate--CoA ligase 2 (549 aa).

ATP is bound by residues 195 to 203 (TSGTTGLPK), 336 to 341 (ETYGPH), Asp-425, and Arg-440. CoA is bound by residues 448-450 (GGE), Lys-506, and 514-516 (CPK). An ATP-binding site is contributed by Lys-530.

This sequence belongs to the ATP-dependent AMP-binding enzyme family. The cofactor is Mg(2+). Mn(2+) serves as cofactor.

It carries out the reaction 4-hydroxybutanoate + ATP + CoA = 4-hydroxybutanoyl-CoA + AMP + diphosphate. The catalysed reaction is acetate + ATP + CoA = acetyl-CoA + AMP + diphosphate. It catalyses the reaction propanoate + ATP + CoA = propanoyl-CoA + AMP + diphosphate. The enzyme catalyses a medium-chain fatty acid + ATP + CoA = a medium-chain fatty acyl-CoA + AMP + diphosphate. Its function is as follows. Catalyzes the ligation of coenzyme A (CoA) to 4-hydroxybutyrate (4HB). It can also use butyrate, valerate, propionate, acetate and 3-hydroxybutyrate (3HB) as substrates. The chain is 4-hydroxybutyrate--CoA ligase 2 from Metallosphaera sedula (strain ATCC 51363 / DSM 5348 / JCM 9185 / NBRC 15509 / TH2).